Reading from the N-terminus, the 201-residue chain is Peptidyl-tRNA hydrolase (201 aa).

Tyrosine 17 contributes to the tRNA binding site. The Proton acceptor role is filled by histidine 22. Residues phenylalanine 76, asparagine 78, and asparagine 124 each coordinate tRNA.

The protein belongs to the PTH family. As to quaternary structure, monomer.

It is found in the cytoplasm. It carries out the reaction an N-acyl-L-alpha-aminoacyl-tRNA + H2O = an N-acyl-L-amino acid + a tRNA + H(+). In terms of biological role, hydrolyzes ribosome-free peptidyl-tRNAs (with 1 or more amino acids incorporated), which drop off the ribosome during protein synthesis, or as a result of ribosome stalling. Its function is as follows. Catalyzes the release of premature peptidyl moieties from peptidyl-tRNA molecules trapped in stalled 50S ribosomal subunits, and thus maintains levels of free tRNAs and 50S ribosomes. The protein is Peptidyl-tRNA hydrolase of Nitratidesulfovibrio vulgaris (strain ATCC 29579 / DSM 644 / CCUG 34227 / NCIMB 8303 / VKM B-1760 / Hildenborough) (Desulfovibrio vulgaris).